Here is a 137-residue protein sequence, read N- to C-terminus: 2-iminobutanoate/2-iminopropanoate deaminase (137 aa).

The residue at position 2 (serine 2) is an N-acetylserine. An N6-succinyllysine mark is found at lysine 13 and lysine 67. Position 74 is a phosphothreonine (threonine 74). A Phosphoserine modification is found at serine 136.

It belongs to the RutC family. In terms of assembly, homotrimer. Interacts with YTHDF2.

It localises to the cytoplasm. It is found in the nucleus. Its subcellular location is the peroxisome. The protein localises to the mitochondrion. The catalysed reaction is 2-iminobutanoate + H2O = 2-oxobutanoate + NH4(+). It carries out the reaction 2-iminopropanoate + H2O = pyruvate + NH4(+). In terms of biological role, catalyzes the hydrolytic deamination of enamine/imine intermediates that form during the course of normal metabolism. May facilitate the release of ammonia from these potentially toxic reactive metabolites, reducing their impact on cellular components. It may act on enamine/imine intermediates formed by several types of pyridoxal-5'-phosphate-dependent dehydratases including L-threonine dehydratase. Functionally, also promotes endoribonucleolytic cleavage of some transcripts by promoting recruitment of the ribonuclease P/MRP complex. Acts by bridging YTHDF2 and the ribonuclease P/MRP complex. RIDA/HRSP12 binds to N6-methyladenosine (m6A)-containing mRNAs containing a 5'-GGUUC-3' motif: cooperative binding of RIDA/HRSP12 and YTHDF2 to such transcripts lead to recruitment of the ribonuclease P/MRP complex and subsequent endoribonucleolytic cleavage. The chain is 2-iminobutanoate/2-iminopropanoate deaminase from Bos taurus (Bovine).